The following is a 607-amino-acid chain: Albumin (607 aa).

Residues methionine 1–phenylalanine 18 form the signal peptide. Positions arginine 19–arginine 24 are excised as a propeptide. 3 Albumin domains span residues arginine 19 to lysine 209, glutamate 210 to proline 402, and leucine 403 to alanine 600. A Cu cation-binding site is contributed by histidine 27. Serine 29 is modified (phosphoserine). Residues glutamate 30 and aspartate 37 each contribute to the Ca(2+) site. A disulfide bond links cysteine 77 and cysteine 86. 2 positions are modified to phosphoserine: serine 82 and serine 89. Residue histidine 91 participates in Zn(2+) binding. Disulfide bonds link cysteine 99-cysteine 115, cysteine 114-cysteine 125, cysteine 147-cysteine 192, cysteine 191-cysteine 200, cysteine 223-cysteine 269, and cysteine 268-cysteine 276. A Phosphothreonine modification is found at threonine 107. At lysine 228 the chain carries N6-succinyllysine. Residue glutamate 267 coordinates Ca(2+). 2 residues coordinate Zn(2+): histidine 270 and aspartate 272. Residues aspartate 272, glutamate 275, aspartate 278, and aspartate 282 each coordinate Ca(2+). Disulfide bonds link cysteine 288–cysteine 302, cysteine 301–cysteine 312, cysteine 339–cysteine 384, cysteine 383–cysteine 392, cysteine 415–cysteine 461, cysteine 460–cysteine 471, cysteine 484–cysteine 500, and cysteine 499–cysteine 510. Serine 442 bears the Phosphoserine mark. Threonine 443 and threonine 445 each carry phosphothreonine. At serine 512 the chain carries Phosphoserine. Disulfide bonds link cysteine 537/cysteine 582 and cysteine 581/cysteine 590. Residue lysine 557 is modified to N6-methyllysine. Phosphothreonine is present on threonine 569. Residue lysine 587 is modified to N6-succinyllysine.

It belongs to the ALB/AFP/VDB family. As to quaternary structure, interacts with FCGRT; this interaction regulates ALB homeostasis. Interacts with TASOR. In plasma, occurs in a covalently-linked complex with chromophore-bound alpha-1-microglobulin; this interaction does not prevent fatty acid binding to ALB. Phosphorylated by FAM20C in the extracellular medium. In terms of tissue distribution, plasma.

It localises to the secreted. In terms of biological role, binds water, Ca(2+), Na(+), K(+), fatty acids, hormones, bilirubin and drugs. Its main function is the regulation of the colloidal osmotic pressure of blood. Major zinc transporter in plasma, typically binds about 80% of all plasma zinc. Major calcium and magnesium transporter in plasma, binds approximately 45% of circulating calcium and magnesium in plasma. Potentially has more than two calcium-binding sites and might additionally bind calcium in a non-specific manner. The shared binding site between zinc and calcium at residue Asp-272 suggests a crosstalk between zinc and calcium transport in the blood. The rank order of affinity is zinc &gt; calcium &gt; magnesium. Binds to the bacterial siderophore enterobactin and inhibits enterobactin-mediated iron uptake of E.coli from ferric transferrin, and may thereby limit the utilization of iron and growth of enteric bacteria such as E.coli. Does not prevent iron uptake by the bacterial siderophore aerobactin. In Equus asinus (Donkey), this protein is Albumin (ALB).